The following is a 756-amino-acid chain: ATP-dependent 6-phosphofructokinase 2 (756 aa).

Residues 1-393 form an N-terminal catalytic PFK domain 1 region; sequence MEQKFKKGKD…KQTYLNFVSI (393 aa). Residues G20, 81–82, and 111–114 contribute to the ATP site; these read RC and GDGS. D112 provides a ligand contact to Mg(2+). Substrate contacts are provided by residues 157–159, R194, 201–203, E257, R285, and 291–294; these read SID, MGR, and HLQR. The active-site Proton acceptor is D159. The tract at residues 394–404 is interdomain linker; the sequence is PLSTTMPSRTK. Residues 405 to 756 are C-terminal regulatory PFK domain 2; sequence TFAVVHIGSP…KKPQEAVLSS (352 aa). Beta-D-fructose 2,6-bisphosphate-binding positions include R474, 530 to 534, 575 to 577, E632, R658, and 664 to 667; these read TISNN, MGS, and YSQL.

The protein belongs to the phosphofructokinase type A (PFKA) family. ATP-dependent PFK group I subfamily. Eukaryotic two domain clade 'E' sub-subfamily. Homotetramer. Requires Mg(2+) as cofactor.

The protein localises to the cytoplasm. It catalyses the reaction beta-D-fructose 6-phosphate + ATP = beta-D-fructose 1,6-bisphosphate + ADP + H(+). Its pathway is carbohydrate degradation; glycolysis; D-glyceraldehyde 3-phosphate and glycerone phosphate from D-glucose: step 3/4. With respect to regulation, allosterically activated by ADP, AMP, or fructose 2,6-bisphosphate, and allosterically inhibited by ATP or citrate. Functionally, catalyzes the phosphorylation of D-fructose 6-phosphate to fructose 1,6-bisphosphate by ATP, the first committing step of glycolysis. This is ATP-dependent 6-phosphofructokinase 2 from Caenorhabditis elegans.